We begin with the raw amino-acid sequence, 141 residues long: Large ribosomal subunit protein uL16m (141 aa).

The protein belongs to the universal ribosomal protein uL16 family.

The protein resides in the mitochondrion. The chain is Large ribosomal subunit protein uL16m (RPL16) from Acanthamoeba castellanii (Amoeba).